The primary structure comprises 234 residues: MLTSHFPLPFAGHRLHIVDFDASSFREHDLLWLPHHDRLRSAGRKRKAEHLAGRIAAVHALREVGVRTVPGMGDKRQPLWPDGLFGSISHCATTALAVISRQRIGIDIEKIMSQHTATELAPSIIDSDERQILQASLLPFPLALTLAFSAKESVYKAFSDRVTLPGFNSAKVTSLTATHISLHLLPAFAATMAERTVRTEWFQRDNSVITLVSAITRVPHDRSAPASILSAIPR.

Mg(2+)-binding residues include aspartate 107, glutamate 109, and glutamate 152.

It belongs to the P-Pant transferase superfamily. EntD family. EntB, EntD, EntE, and EntF form a multienzyme complex called enterobactin synthase. Mg(2+) is required as a cofactor.

It is found in the membrane. The enzyme catalyses apo-[aryl-carrier protein] + CoA = holo-[aryl-carrier protein] + adenosine 3',5'-bisphosphate + H(+). It carries out the reaction apo-[peptidyl-carrier protein] + CoA = holo-[peptidyl-carrier protein] + adenosine 3',5'-bisphosphate + H(+). The protein operates within siderophore biosynthesis; enterobactin biosynthesis. In terms of biological role, involved in the biosynthesis of the siderophore enterobactin (enterochelin), which is a macrocyclic trimeric lactone of N-(2,3-dihydroxybenzoyl)-serine. The serine trilactone serves as a scaffolding for the three catechol functionalities that provide hexadentate coordination for the tightly ligated iron(2+) atoms. Plays an essential role in the assembly of the enterobactin by catalyzing the transfer of the 4'-phosphopantetheine (Ppant) moiety from coenzyme A to the apo-domains of both EntB (ArCP domain) and EntF (PCP domain) to yield their holo-forms which make them competent for the activation of 2,3-dihydroxybenzoate (DHB) and L-serine, respectively. This is Enterobactin synthase component D from Salmonella typhimurium (strain LT2 / SGSC1412 / ATCC 700720).